Consider the following 355-residue polypeptide: Probable butyrate kinase (355 aa).

This sequence belongs to the acetokinase family.

The protein localises to the cytoplasm. The enzyme catalyses butanoate + ATP = butanoyl phosphate + ADP. This chain is Probable butyrate kinase, found in Clostridium botulinum (strain Eklund 17B / Type B).